A 60-amino-acid polypeptide reads, in one-letter code: MKAIIFLFAVLTVVAIIIPIISGEPNAGPHAASIDLNEIMKKMRPDLLKMLDDIKTKIQG.

A signal peptide spans Met-1 to Gly-23. A propeptide spanning residues Glu-24 to Ser-33 is cleaved from the precursor. Position 59 is a glutamine amide (Gln-59).

This sequence belongs to the formicidae venom clade 2 family. As to expression, expressed by the venom gland.

It is found in the secreted. In terms of biological role, toxin that causes a rapid and irreversible paralysis when intrathoracically injected into insects (blowflies). Does not cause spontaneous nocifensive behaviors by intraplantar injection in mice. The sequence is that of Myrmicitoxin(1)-Pr4a from Pogonomyrmex rugosus (Desert harvester ant).